Here is a 306-residue protein sequence, read N- to C-terminus: WUSCHEL-related homeobox 13 (306 aa).

Residues 1 to 11 are compositionally biased toward pro residues; sequence MMALGVPPPPS. Disordered stretches follow at residues 1-20, 103-142, and 190-276; these read MMALGVPPPPSRAYVSGPLR, PRSHGHRTGGGGFSLKSSPFSSVGEERVPDPKPRRNPRPE, and SRSK…ARAT. A compositionally biased stretch (basic and acidic residues) spans 126–142; sequence GEERVPDPKPRRNPRPE. A DNA-binding region (homeobox; WUS-type) is located at residues 132–196; it reads DPKPRRNPRP…NRKSRSKNKL (65 aa). Residues 199–210 show a composition bias toward gly residues; sequence GGTGRAGLGLGG. The segment covering 231–242 has biased composition (pro residues); sequence FTPPPILPPQPV. Positions 243 to 270 are enriched in low complexity; sequence QPQQQLVSPVAAPTSLSSSSSDRSSGSS.

Belongs to the WUS homeobox family.

The protein resides in the nucleus. Transcription factor which may be involved in developmental processes. In Oryza sativa subsp. japonica (Rice), this protein is WUSCHEL-related homeobox 13 (WOX13).